The following is a 293-amino-acid chain: MKRIFLFIVTNLAVMVVLSATLRVLGVDRYITAQGINFQSLLILSVVIGFTGAIISLLISKPMAKWSTGARVIDPAAPGGSREAWLVETVHQLADRAGIGHPEVAIYDGSPNAFATGAFKNDSLVAVSTGLLDSMTEEEVAAVLGHEVAHIANGDMITLTLIQGVVNTFVVFLARVVGYFIDRTVFRNERGVGAGYFITVLVCEIIFGLLASIIVAWFSRQREYRADAGSAQLMGSREPMMRALARLGGLEPGELPKSFEASGIAGKGGLGAIFASHPPIQARIAALQHMRVV.

A run of 2 helical transmembrane segments spans residues 4–24 and 40–60; these read IFLF…TLRV and SLLI…LLIS. H146 contributes to the Zn(2+) binding site. Residue E147 is part of the active site. H150 contacts Zn(2+). Helical transmembrane passes span 161-181 and 197-217; these read LIQG…GYFI and FITV…IVAW. A Zn(2+)-binding site is contributed by E223.

This sequence belongs to the peptidase M48B family. The cofactor is Zn(2+).

The protein resides in the cell inner membrane. The polypeptide is Protease HtpX homolog (Bordetella petrii (strain ATCC BAA-461 / DSM 12804 / CCUG 43448)).